Here is a 427-residue protein sequence, read N- to C-terminus: MKLLTNANTLKGTIRVPGDKSISHRAIIFGSISQGVTRIVDVLRGEDVLSTIEAFKQMGVLIEDDGEIITIYGKGFAGLTQPNNLLDMGNSGTSMRLIAGVLAGQEFEVTMVGDNSLSKRPMDRIALPLSKMGARISGVTNRDLPPLKLQGTKKLKPIFYHLPVASAQVKSALIFAALQTKGESLIVEKEQTRNHTEDMIRQFGGHLDIKDKEIRLNGGQSLVGQDIRVPGDISSAAFWIVAGLIIPNSHIILENVGINETRTGILDVVSKMGGKIKLSSVDNQVKSATLTVDYSHLQATHISGAMIPRLIDELPIIALLATQAQGTTVIADAQELKVKETDRIQVVVESLKQMGADITATADGMIIRGNTPLHAASLDCHGDHRIGMMIAIAALLVKEGEVDLSGEEAINTSYPNFLEHLEGLVNA.

Positions 20, 21, and 25 each coordinate 3-phosphoshikimate. Position 20 (lysine 20) interacts with phosphoenolpyruvate. Phosphoenolpyruvate-binding residues include glycine 92 and arginine 120. Serine 166, glutamine 168, aspartate 312, and lysine 339 together coordinate 3-phosphoshikimate. Residue glutamine 168 coordinates phosphoenolpyruvate. Catalysis depends on aspartate 312, which acts as the Proton acceptor. Positions 343 and 385 each coordinate phosphoenolpyruvate.

It belongs to the EPSP synthase family. Monomer.

The protein localises to the cytoplasm. It carries out the reaction 3-phosphoshikimate + phosphoenolpyruvate = 5-O-(1-carboxyvinyl)-3-phosphoshikimate + phosphate. Its pathway is metabolic intermediate biosynthesis; chorismate biosynthesis; chorismate from D-erythrose 4-phosphate and phosphoenolpyruvate: step 6/7. Functionally, catalyzes the transfer of the enolpyruvyl moiety of phosphoenolpyruvate (PEP) to the 5-hydroxyl of shikimate-3-phosphate (S3P) to produce enolpyruvyl shikimate-3-phosphate and inorganic phosphate. The polypeptide is 3-phosphoshikimate 1-carboxyvinyltransferase (Streptococcus agalactiae serotype Ia (strain ATCC 27591 / A909 / CDC SS700)).